Here is a 245-residue protein sequence, read N- to C-terminus: Phosphoadenosine 5'-phosphosulfate reductase (245 aa).

Cysteine 239 serves as the catalytic Nucleophile; cysteine thiosulfonate intermediate.

The protein belongs to the PAPS reductase family. CysH subfamily.

It is found in the cytoplasm. It catalyses the reaction [thioredoxin]-disulfide + sulfite + adenosine 3',5'-bisphosphate + 2 H(+) = [thioredoxin]-dithiol + 3'-phosphoadenylyl sulfate. It participates in sulfur metabolism; hydrogen sulfide biosynthesis; sulfite from sulfate: step 3/3. In terms of biological role, catalyzes the formation of sulfite from phosphoadenosine 5'-phosphosulfate (PAPS) using thioredoxin as an electron donor. This is Phosphoadenosine 5'-phosphosulfate reductase from Shewanella oneidensis (strain ATCC 700550 / JCM 31522 / CIP 106686 / LMG 19005 / NCIMB 14063 / MR-1).